A 694-amino-acid chain; its full sequence is Elongation factor G (694 aa).

In terms of domain architecture, tr-type G spans 8-287 (EDYRNFGIMA…AVVEFLPAPT (280 aa)). GTP is bound by residues 17-24 (AHIDAGKT), 86-90 (DTPGH), and 140-143 (NKMD).

This sequence belongs to the TRAFAC class translation factor GTPase superfamily. Classic translation factor GTPase family. EF-G/EF-2 subfamily.

The protein resides in the cytoplasm. Functionally, catalyzes the GTP-dependent ribosomal translocation step during translation elongation. During this step, the ribosome changes from the pre-translocational (PRE) to the post-translocational (POST) state as the newly formed A-site-bound peptidyl-tRNA and P-site-bound deacylated tRNA move to the P and E sites, respectively. Catalyzes the coordinated movement of the two tRNA molecules, the mRNA and conformational changes in the ribosome. The polypeptide is Elongation factor G (Brucella melitensis biotype 1 (strain ATCC 23456 / CCUG 17765 / NCTC 10094 / 16M)).